Here is a 221-residue protein sequence, read N- to C-terminus: Glutathione S-transferase U25 (221 aa).

Ala-2 bears the N-acetylalanine mark. The region spanning 3-82 (DEVILLDFWP…YIDEVWPSKT (80 aa)) is the GST N-terminal domain. Glutathione is bound by residues 13–14 (SM), 39–40 (NK), 53–54 (KI), and 66–67 (ES). Residues 88–208 (DPYQRAQAKF…LPDSEKIIKF (121 aa)) form the GST C-terminal domain. Position 149 is a phosphothreonine (Thr-149).

It belongs to the GST superfamily. Tau family.

It localises to the cytoplasm. It is found in the cytosol. It catalyses the reaction RX + glutathione = an S-substituted glutathione + a halide anion + H(+). Functionally, may be involved in the conjugation of reduced glutathione to a wide number of exogenous and endogenous hydrophobic electrophiles and have a detoxification role against certain herbicides. The protein is Glutathione S-transferase U25 (GSTU25) of Arabidopsis thaliana (Mouse-ear cress).